The sequence spans 99 residues: Antitoxin VapB47 (99 aa).

Belongs to the phD/YefM antitoxin family.

Functionally, antitoxin component of a type II toxin-antitoxin (TA) system. This Mycobacterium tuberculosis (strain CDC 1551 / Oshkosh) protein is Antitoxin VapB47 (vapB47).